Consider the following 424-residue polypeptide: Serine--tRNA ligase (424 aa).

231-233 (TAE) serves as a coordination point for L-serine. 262–264 (RSE) provides a ligand contact to ATP. E285 is a binding site for L-serine. An ATP-binding site is contributed by 349-352 (EISS). S385 provides a ligand contact to L-serine.

Belongs to the class-II aminoacyl-tRNA synthetase family. Type-1 seryl-tRNA synthetase subfamily. Homodimer. The tRNA molecule binds across the dimer.

It is found in the cytoplasm. The enzyme catalyses tRNA(Ser) + L-serine + ATP = L-seryl-tRNA(Ser) + AMP + diphosphate + H(+). The catalysed reaction is tRNA(Sec) + L-serine + ATP = L-seryl-tRNA(Sec) + AMP + diphosphate + H(+). It participates in aminoacyl-tRNA biosynthesis; selenocysteinyl-tRNA(Sec) biosynthesis; L-seryl-tRNA(Sec) from L-serine and tRNA(Sec): step 1/1. Functionally, catalyzes the attachment of serine to tRNA(Ser). Is also able to aminoacylate tRNA(Sec) with serine, to form the misacylated tRNA L-seryl-tRNA(Sec), which will be further converted into selenocysteinyl-tRNA(Sec). This chain is Serine--tRNA ligase, found in Bacillus cereus (strain G9842).